We begin with the raw amino-acid sequence, 446 residues long: tRNA (guanine-N(7)-)-methyltransferase non-catalytic subunit TRM82 (446 aa).

The disordered stretch occupies residues 67-97 (LTQTSEDTEQENTAPYKKQKSSVSKPIKVPK). Residues 87–97 (SSVSKPIKVPK) show a composition bias toward low complexity. 3 WD repeats span residues 107-147 (PIYN…TENC), 202-243 (GHVS…IVKH), and 247-287 (GHRE…LLSK).

The protein belongs to the WD repeat TRM82 family. Forms a heterodimer with the catalytic subunit TRM8.

It localises to the nucleus. It participates in tRNA modification; N(7)-methylguanine-tRNA biosynthesis. Required for the formation of N(7)-methylguanine at position 46 (m7G46) in tRNA. In the complex, it is required to stabilize and induce conformational changes of the catalytic subunit. This chain is tRNA (guanine-N(7)-)-methyltransferase non-catalytic subunit TRM82, found in Debaryomyces hansenii (strain ATCC 36239 / CBS 767 / BCRC 21394 / JCM 1990 / NBRC 0083 / IGC 2968) (Yeast).